The chain runs to 46 residues: Diuretic hormone class 1 (46 aa).

Ile46 carries the isoleucine amide modification.

Its subcellular location is the secreted. In terms of biological role, regulation of fluid secretion. Stimulates primary urine secretion by Malpighian tubules and causes a dose-dependent stimulation of cAMP levels in the tubules. Has a greater effect on the transport of Na(+) then K(+) ions. In vitro, has synergistic effects with the smaller diuretic hormone DH(31) which co-occurs with it. This is Diuretic hormone class 1 from Diploptera punctata (Pacific beetle cockroach).